Reading from the N-terminus, the 291-residue chain is UDP-N-acetylenolpyruvoylglucosamine reductase (291 aa).

In terms of domain architecture, FAD-binding PCMH-type spans 22–187 (RIGGPARYFK…ASATFQLTKD (166 aa)). Residue Arg166 is part of the active site. Catalysis depends on Cys214, which acts as the Proton donor. Glu283 is an active-site residue.

Belongs to the MurB family. FAD is required as a cofactor.

Its subcellular location is the cytoplasm. The enzyme catalyses UDP-N-acetyl-alpha-D-muramate + NADP(+) = UDP-N-acetyl-3-O-(1-carboxyvinyl)-alpha-D-glucosamine + NADPH + H(+). The protein operates within cell wall biogenesis; peptidoglycan biosynthesis. Cell wall formation. The protein is UDP-N-acetylenolpyruvoylglucosamine reductase of Chlamydia trachomatis serovar A (strain ATCC VR-571B / DSM 19440 / HAR-13).